The chain runs to 212 residues: Protein-L-isoaspartate O-methyltransferase (212 aa).

Residue S60 is part of the active site.

Belongs to the methyltransferase superfamily. L-isoaspartyl/D-aspartyl protein methyltransferase family.

Its subcellular location is the cytoplasm. It carries out the reaction [protein]-L-isoaspartate + S-adenosyl-L-methionine = [protein]-L-isoaspartate alpha-methyl ester + S-adenosyl-L-homocysteine. In terms of biological role, catalyzes the methyl esterification of L-isoaspartyl residues in peptides and proteins that result from spontaneous decomposition of normal L-aspartyl and L-asparaginyl residues. It plays a role in the repair and/or degradation of damaged proteins. The chain is Protein-L-isoaspartate O-methyltransferase from Pseudomonas entomophila (strain L48).